Reading from the N-terminus, the 418-residue chain is MNIPPELTFEVLVRLPLKSLARFRSMCKEWKLVIDSEFFRDCFMSHNSSSVSWSIIQTRPHKLTLEIVGHHGCKTWGLTRSPGSLVSFFAETTIRKLQVLACTDGLVLLYVESCVGTPMYYVGNPLFQEWFRIPLRPKYTSQNVEKLRNHERFSDSGLVTKMQSGIVVSYKVVWLIAHTFAQVDFAIYSSNTGEWEIKNVTCLHSAYWFSHHKSIALNGILHWLSNLTGSFLAYDFYGGHHDACSIIYFPDNGKDYELPRFRRTITTSEGSIVYFNEFGGNANRKVRVWRLVKYTDGPEAWQLFWEASLASVTKLGIDYFPVVMHPLKSEIIYLWSRNKKGMVLFNLRTHVFSLHKESEDERKCMDGCTLSFNWCNEYMETVHRYFSPSFQGGPNLLLASQYVLPRWLSRLPRPQPSN.

In terms of domain architecture, F-box spans 1 to 42 (MNIPPELTFEVLVRLPLKSLARFRSMCKEWKLVIDSEFFRDC).

The sequence is that of Putative F-box protein At3g23950 from Arabidopsis thaliana (Mouse-ear cress).